A 554-amino-acid chain; its full sequence is Putative acyl-coenzyme A synthetase (554 aa).

AMP is bound at residue 195 to 206; that stretch reads LLYSSGTTGPPK.

The protein belongs to the ATP-dependent AMP-binding enzyme family.

The polypeptide is Putative acyl-coenzyme A synthetase (Emericella nidulans (strain FGSC A4 / ATCC 38163 / CBS 112.46 / NRRL 194 / M139) (Aspergillus nidulans)).